Reading from the N-terminus, the 211-residue chain is Glutathione S-transferase (211 aa).

Residues 3 to 87 (DNIVLYYFDA…YLSKKYNICG (85 aa)) form the GST N-terminal domain. Glutathione contacts are provided by residues 58–59 (QV), 71–72 (QS), Asp105, Lys117, and Thr121. The GST C-terminal domain maps to 89–211 (SELNEFYADM…YITNRKESVY (123 aa)).

This sequence belongs to the GST superfamily. As to quaternary structure, homodimer. In the absence of ligands two homodimers may interact to form a tetramer.

It catalyses the reaction RX + glutathione = an S-substituted glutathione + a halide anion + H(+). With respect to regulation, inhibited by chloroquine, cibacron blue, ferriprotoporphyrin IX (hemin) and S-hexylglutathione. Its function is as follows. Conjugation of reduced glutathione to a wide number of exogenous and endogenous hydrophobic electrophiles. May also function as a storage protein or ligandin for parasitotoxic ferriprotoporphyrin IX (hemin). This is Glutathione S-transferase from Plasmodium falciparum (isolate 3D7).